The primary structure comprises 342 residues: L-threonine 3-dehydrogenase (342 aa).

C38 provides a ligand contact to Zn(2+). Catalysis depends on charge relay system residues T40 and H43. Residues H63, E64, C93, C96, C99, and C107 each coordinate Zn(2+). Residues I175, D195, R200, 262-264, and 286-287 each bind NAD(+); these read LGL and IY.

The protein belongs to the zinc-containing alcohol dehydrogenase family. As to quaternary structure, homotetramer. Requires Zn(2+) as cofactor.

It is found in the cytoplasm. The enzyme catalyses L-threonine + NAD(+) = (2S)-2-amino-3-oxobutanoate + NADH + H(+). It functions in the pathway amino-acid degradation; L-threonine degradation via oxydo-reductase pathway; glycine from L-threonine: step 1/2. Its function is as follows. Catalyzes the NAD(+)-dependent oxidation of L-threonine to 2-amino-3-ketobutyrate. This is L-threonine 3-dehydrogenase from Streptomyces avermitilis (strain ATCC 31267 / DSM 46492 / JCM 5070 / NBRC 14893 / NCIMB 12804 / NRRL 8165 / MA-4680).